The chain runs to 409 residues: Probable sodium/metabolite cotransporter BASS6, chloroplastic (409 aa).

Residues 1-49 (MSVITTPIETLHLKSTLRLLPRAVYRSQRIQVFPPNIFSNTSLSSPLRI) constitute a chloroplast transit peptide. A run of 9 helical transmembrane segments spans residues 100-120 (ILPH…PSFT), 121-141 (WFTS…VGIN), 170-190 (VLGF…TPIG), 191-211 (AGIM…ATFL), 221-241 (IVMT…LSLL), 253-273 (GMIS…LLLN), 285-305 (PFLP…PLAL), 316-336 (ATIL…GYFL), and 381-401 (IPPA…VLIW).

Belongs to the bile acid:sodium symporter (BASS) (TC 2.A.28) family.

The protein localises to the membrane. Its subcellular location is the plastid. The protein resides in the chloroplast envelope. Functionally, may function as sodium-coupled metabolite transporter across the chloroplast envelope. This is Probable sodium/metabolite cotransporter BASS6, chloroplastic (BASS6) from Arabidopsis thaliana (Mouse-ear cress).